The sequence spans 244 residues: MILRVEGLKKVYPDGTVGIKEINTSIRRGELISVIGPSGAGKSTFLRSINRLVEPTSGAIFVEGENICNARGKKLRQMRRKIGMVFQHYNLIKRSSVLQNVLHGRLGYMSTIKGGLGRFHESDTKRALSILKRVGLEEQALKRADELSGGQQQRVGIARAIAQNPTLILADEPIASLDPTASENVLHYMKTICQEEGITTVVNLHQVEFAKKFADRMIGIKAGKIVFDGTPRELTDYTVDQLYQ.

The ABC transporter domain maps to 3-242 (LRVEGLKKVY…ELTDYTVDQL (240 aa)). 36-43 (GPSGAGKS) lines the ATP pocket.

This sequence belongs to the ABC transporter superfamily. Phosphonates importer (TC 3.A.1.9.1) family. The complex is composed of two ATP-binding proteins (PhnC), two transmembrane proteins (PhnE) and a solute-binding protein (PhnD).

It is found in the cell membrane. It carries out the reaction phosphonate(out) + ATP + H2O = phosphonate(in) + ADP + phosphate + H(+). Functionally, part of the ABC transporter complex PhnCDE involved in phosphonates import. Responsible for energy coupling to the transport system. The polypeptide is Phosphonates import ATP-binding protein PhnC 2 (Halalkalibacterium halodurans (strain ATCC BAA-125 / DSM 18197 / FERM 7344 / JCM 9153 / C-125) (Bacillus halodurans)).